A 136-amino-acid chain; its full sequence is Protein NrdI (136 aa).

Belongs to the NrdI family.

Probably involved in ribonucleotide reductase function. This is Protein NrdI from Shigella boydii serotype 4 (strain Sb227).